Consider the following 352-residue polypeptide: Protein CIA1 (352 aa).

WD repeat units follow at residues 18 to 64 (GHTD…RSWT), 72 to 111 (THTRTVRSCAWSPSGQLLATASFDGTTGIWKNYGSEFECI), 116 to 155 (GHENEVKSVSWNASGSCLATCSRDKSVWIWEVLEGNEYDC), 161 to 200 (GHTQDVKMVQWHPTMDVLFSCSYDNTIKVWWSEDDDGEYQ), 211 to 250 (GHSSTVWSISFNAAGDKMVTCSDDLTLKIWGTDIAKMQSG), 265 to 303 (YHDRTIYSAHWSRDDIIASGAGDNAIRLFVDSKHDSVDG), and 315 to 352 (AHENDVNSVQWSPGEGNRLLASASDDGMVKIWQLATKP).

It belongs to the WD repeat CIA1 family. As to quaternary structure, part of a complex composed of AE7, CIA1, MMS19 and NAR1. Interacts with AE7 and NAR1.

The protein localises to the nucleus. It localises to the cytoplasm. Essential component of the cytosolic iron-sulfur (Fe-S) protein assembly (CIA) machinery. Required for the maturation of extramitochondrial Fe/S proteins. This is Protein CIA1 from Arabidopsis thaliana (Mouse-ear cress).